The chain runs to 99 residues: Putative septation protein SpoVG (99 aa).

It belongs to the SpoVG family.

Functionally, could be involved in septation. This chain is Putative septation protein SpoVG, found in Myxococcus xanthus (strain DK1622).